We begin with the raw amino-acid sequence, 118 residues long: Group 1 truncated hemoglobin GlbN (118 aa).

His70 contacts heme.

This sequence belongs to the truncated hemoglobin family. Group I subfamily. Monomer. Heme is required as a cofactor.

Its subcellular location is the membrane. This Nostoc commune protein is Group 1 truncated hemoglobin GlbN (glbN).